The sequence spans 149 residues: UPF0260 protein RCAP_rcc02083 (149 aa).

The protein belongs to the UPF0260 family.

The polypeptide is UPF0260 protein RCAP_rcc02083 (Rhodobacter capsulatus (strain ATCC BAA-309 / NBRC 16581 / SB1003)).